The sequence spans 199 residues: CASP-like protein 1D2 (199 aa).

The segment at 1 to 27 (MASTENPDPETGKSEPIPASATPPPSS) is disordered. An N-acetylalanine modification is found at A2. Topologically, residues 2–36 (ASTENPDPETGKSEPIPASATPPPSSAASFLDCRK) are cytoplasmic. A helical membrane pass occupies residues 37-57 (IDIITRVLLFSATLTALIVMV). Over 58–85 (TSDQTEMTQLPGVSSPAPVSAEFNDSPA) the chain is Extracellular. The helical transmembrane segment at 86 to 106 (FIYFVVALVVASFYALISTLV) threads the bilayer. Topologically, residues 107–129 (SISLLLKPEFTAQFSIYLASLDM) are cytoplasmic. The chain crosses the membrane as a helical span at residues 130–150 (VMLGILASATGTAGGVAYIAL). Residues 151 to 171 (KGNEEVGWNKICNVYDKFCRY) lie on the Extracellular side of the membrane. Residues 172–192 (IATSLALSLFASLLLLVLSIW) form a helical membrane-spanning segment. Topologically, residues 193–199 (SALSKRT) are cytoplasmic.

The protein belongs to the Casparian strip membrane proteins (CASP) family. As to quaternary structure, homodimer and heterodimers. As to expression, expressed in the root endodermis and flowers.

It localises to the cell membrane. The protein is CASP-like protein 1D2 of Arabidopsis thaliana (Mouse-ear cress).